The primary structure comprises 263 residues: tRNA pseudouridine synthase A (263 aa).

Asp-51 acts as the Nucleophile in catalysis. Position 109 (Tyr-109) interacts with substrate.

This sequence belongs to the tRNA pseudouridine synthase TruA family. Homodimer.

It catalyses the reaction uridine(38/39/40) in tRNA = pseudouridine(38/39/40) in tRNA. Formation of pseudouridine at positions 38, 39 and 40 in the anticodon stem and loop of transfer RNAs. In Pseudoalteromonas atlantica (strain T6c / ATCC BAA-1087), this protein is tRNA pseudouridine synthase A.